A 415-amino-acid polypeptide reads, in one-letter code: Levansucrase (415 aa).

Residues tryptophan 45, aspartate 46, alanine 132, arginine 202, and aspartate 203 each coordinate sucrose. Residue aspartate 46 is the Nucleophile of the active site. Residue glutamate 287 is the Proton donor/acceptor of the active site.

The protein belongs to the glycosyl hydrolase 68 family.

It carries out the reaction [6)-beta-D-fructofuranosyl-(2-&gt;](n) alpha-D-glucopyranoside + sucrose = [6)-beta-D-fructofuranosyl-(2-&gt;](n+1) alpha-D-glucopyranoside + D-glucose. Catalyzes the synthesis of levan, a fructose polymer, by transferring the fructosyl moiety from sucrose to a growing acceptor molecule. The sequence is that of Levansucrase from Rahnella aquatilis (strain ATCC 33071 / DSM 4594 / JCM 1683 / NBRC 105701 / NCIMB 13365 / CIP 78.65).